The following is a 95-amino-acid chain: Cell division topological specificity factor (95 aa).

This sequence belongs to the MinE family.

Its function is as follows. Prevents the cell division inhibition by proteins MinC and MinD at internal division sites while permitting inhibition at polar sites. This ensures cell division at the proper site by restricting the formation of a division septum at the midpoint of the long axis of the cell. The chain is Cell division topological specificity factor from Synechococcus sp. (strain CC9902).